The primary structure comprises 181 residues: Protein Syd (181 aa).

Belongs to the Syd family.

The protein localises to the cell inner membrane. Its function is as follows. Interacts with the SecY protein in vivo. May bind preferentially to an uncomplexed state of SecY, thus functioning either as a chelating agent for excess SecY in the cell or as a regulatory factor that negatively controls the translocase function. In Escherichia fergusonii (strain ATCC 35469 / DSM 13698 / CCUG 18766 / IAM 14443 / JCM 21226 / LMG 7866 / NBRC 102419 / NCTC 12128 / CDC 0568-73), this protein is Protein Syd.